The primary structure comprises 233 residues: tRNA (guanine-N(7)-)-methyltransferase (233 aa).

Residues E65, E90, D117, and D139 each coordinate S-adenosyl-L-methionine. Residue D139 is part of the active site. Substrate is bound by residues K143, D175, and 212–215; that span reads TRYE.

Belongs to the class I-like SAM-binding methyltransferase superfamily. TrmB family.

The enzyme catalyses guanosine(46) in tRNA + S-adenosyl-L-methionine = N(7)-methylguanosine(46) in tRNA + S-adenosyl-L-homocysteine. It participates in tRNA modification; N(7)-methylguanine-tRNA biosynthesis. Functionally, catalyzes the formation of N(7)-methylguanine at position 46 (m7G46) in tRNA. The protein is tRNA (guanine-N(7)-)-methyltransferase of Roseobacter denitrificans (strain ATCC 33942 / OCh 114) (Erythrobacter sp. (strain OCh 114)).